We begin with the raw amino-acid sequence, 491 residues long: Fatty acyl-CoA reductase 1 (491 aa).

Belongs to the fatty acyl-CoA reductase family. In terms of tissue distribution, expressed in the endodermal cell layer surrounding the central vasculature in roots. Expressed in the hilum region of seeds. Expressed in lateral root tips, cotyledons, the shoot apex, young leaves, petals, stamen filaments, and receptacle of siliques.

The catalysed reaction is a long-chain fatty acyl-CoA + 2 NADPH + 2 H(+) = a long-chain primary fatty alcohol + 2 NADP(+) + CoA. Its function is as follows. Catalyzes the reduction of fatty acyl-CoA to fatty alcohols. Catalyzes specifically the formation of C18:0 and C22:0 fatty alcohols. Provides the fatty alcohols required for synthesis of suberin in roots, seed coat and wound-induced leaf tissue. Provides the fatty alcohols required for synthesis of alkyl hydroxycinnamates in root waxes. This is Fatty acyl-CoA reductase 1 from Arabidopsis thaliana (Mouse-ear cress).